We begin with the raw amino-acid sequence, 507 residues long: Monoogygenase CPUR_05431 (507 aa).

Belongs to the PheA/TfdB FAD monooxygenase family. It depends on FAD as a cofactor.

It functions in the pathway pigment biosynthesis. In terms of biological role, monoogygenase; part of the ergochrome gene cluster responsible for the typical purple-black color of the ergot sclerotia. The ergochrome gene cluster produces several ergot pigments including the yellow ergochrome secalonic acid and its derivatives, as well as the red anthraquinones endocrocin and clavorubin. The pathway begins with the synthesis of atrochrysone thioester by the polyketide synthase (PKS) CPUR_05437. The atrochrysone carboxyl ACP thioesterase CPUR_05436 then breaks the thioester bond and releases the atrochrysone carboxylic acid from CPUR_05437. The atrochrysone carboxylic acid is then converted to atrochrysone which is further transformed into emodin anthrone. The next step is performed by the anthrone oxygenase CPUR_05434 that catalyzes the oxidation of emodinanthrone to emodin. Emodin is further modified to yield monodictyphenone via several steps involving CPUR_05427, CPUR_05428, CPUR_05429 and CPUR_05430. The short chain dehydrogenase/reductase CPUR_05418 then catalyzes the C-5 ketoreduction to give the xanthone skeleton of the monomeric units. Ergochromes formation requires further dimerization steps of different xanthone units, probably catalyzed by the cytochrome P450 monooxygenase CPUR_05419. CPUR_05425, CPUR_05426 and CPUR_05431 are unique to Claviceps, thus it is likely that they are involved in further modification of xanthone units or in their dimerization. The yellow ergochromes and the red anthraquinone pigments endocrocin and clavorubin are products from the same PKS derived precursors and the latter are likely shunt products in the pathway of xanthone biosynthesis. It is proposed that atrochrysone carboxylic acid released from the PKS CPUR_05437 can also be converted to endocrocin anthrone which is further oxidized into endocrocin by CPUR_05435. Endocrocin could be then modified to clavorubin, possibly by CPUR_05423 and CPUR_05431. Clavorubin is the principal anthraquinone metabolite produced by the cluster with a much higher yield compared to endocrocin. The chain is Monoogygenase CPUR_05431 from Claviceps purpurea (strain 20.1) (Ergot fungus).